The primary structure comprises 356 residues: tRNA-specific 2-thiouridylase MnmA 1 (356 aa).

ATP contacts are provided by residues 8–15 and M34; that span reads GMSGGVDS. C103 (nucleophile) is an active-site residue. Cysteines 103 and 199 form a disulfide. G127 serves as a coordination point for ATP. The interval 149–151 is interaction with tRNA; the sequence is KDQ. C199 (cysteine persulfide intermediate) is an active-site residue. Positions 305–306 are interaction with tRNA; that stretch reads RY.

Belongs to the MnmA/TRMU family.

The protein localises to the cytoplasm. It carries out the reaction S-sulfanyl-L-cysteinyl-[protein] + uridine(34) in tRNA + AH2 + ATP = 2-thiouridine(34) in tRNA + L-cysteinyl-[protein] + A + AMP + diphosphate + H(+). Catalyzes the 2-thiolation of uridine at the wobble position (U34) of tRNA, leading to the formation of s(2)U34. In Clostridium botulinum (strain Loch Maree / Type A3), this protein is tRNA-specific 2-thiouridylase MnmA 1.